A 38-amino-acid chain; its full sequence is Large ribosomal subunit protein bL12 (38 aa).

It belongs to the bacterial ribosomal protein bL12 family. Homodimer. Part of the ribosomal stalk of the 50S ribosomal subunit. Forms a multimeric L10(L12)X complex, where L10 forms an elongated spine to which 2 to 4 L12 dimers bind in a sequential fashion. Binds GTP-bound translation factors.

Forms part of the ribosomal stalk which helps the ribosome interact with GTP-bound translation factors. Is thus essential for accurate translation. The polypeptide is Large ribosomal subunit protein bL12 (rplL) (Salinivibrio costicola (Vibrio costicola)).